The following is a 319-amino-acid chain: 4-hydroxy-3-methylbut-2-enyl diphosphate reductase (319 aa).

A [4Fe-4S] cluster-binding site is contributed by Cys-17. Positions 46 and 79 each coordinate (2E)-4-hydroxy-3-methylbut-2-enyl diphosphate. Dimethylallyl diphosphate-binding residues include His-46 and His-79. Positions 46 and 79 each coordinate isopentenyl diphosphate. Cys-101 contributes to the [4Fe-4S] cluster binding site. Residue His-129 coordinates (2E)-4-hydroxy-3-methylbut-2-enyl diphosphate. His-129 provides a ligand contact to dimethylallyl diphosphate. His-129 lines the isopentenyl diphosphate pocket. Catalysis depends on Glu-131, which acts as the Proton donor. Thr-170 lines the (2E)-4-hydroxy-3-methylbut-2-enyl diphosphate pocket. Cys-200 provides a ligand contact to [4Fe-4S] cluster. Ser-228, Ser-229, Asn-230, and Ser-273 together coordinate (2E)-4-hydroxy-3-methylbut-2-enyl diphosphate. Ser-228, Ser-229, Asn-230, and Ser-273 together coordinate dimethylallyl diphosphate. Isopentenyl diphosphate contacts are provided by Ser-228, Ser-229, Asn-230, and Ser-273.

It belongs to the IspH family. The cofactor is [4Fe-4S] cluster.

The catalysed reaction is isopentenyl diphosphate + 2 oxidized [2Fe-2S]-[ferredoxin] + H2O = (2E)-4-hydroxy-3-methylbut-2-enyl diphosphate + 2 reduced [2Fe-2S]-[ferredoxin] + 2 H(+). The enzyme catalyses dimethylallyl diphosphate + 2 oxidized [2Fe-2S]-[ferredoxin] + H2O = (2E)-4-hydroxy-3-methylbut-2-enyl diphosphate + 2 reduced [2Fe-2S]-[ferredoxin] + 2 H(+). Its pathway is isoprenoid biosynthesis; dimethylallyl diphosphate biosynthesis; dimethylallyl diphosphate from (2E)-4-hydroxy-3-methylbutenyl diphosphate: step 1/1. The protein operates within isoprenoid biosynthesis; isopentenyl diphosphate biosynthesis via DXP pathway; isopentenyl diphosphate from 1-deoxy-D-xylulose 5-phosphate: step 6/6. In terms of biological role, catalyzes the conversion of 1-hydroxy-2-methyl-2-(E)-butenyl 4-diphosphate (HMBPP) into a mixture of isopentenyl diphosphate (IPP) and dimethylallyl diphosphate (DMAPP). Acts in the terminal step of the DOXP/MEP pathway for isoprenoid precursor biosynthesis. This is 4-hydroxy-3-methylbut-2-enyl diphosphate reductase from Cereibacter sphaeroides (strain ATCC 17029 / ATH 2.4.9) (Rhodobacter sphaeroides).